A 461-amino-acid chain; its full sequence is Probable tubulin polyglutamylase TTLL9 (461 aa).

The disordered stretch occupies residues 1-21; that stretch reads MSRPKNQNYKGHGLQKGKERE. Residues 22 to 402 enclose the TTL domain; that stretch reads QRASIRFKTT…EARLTGREKR (381 aa). Residues lysine 149 and 155–156 each bind ATP; that span reads QG. Residue glutamine 155 coordinates a protein. Residues 182–208 form a disordered region; the sequence is SLEAQPARNTVNPSGSHDTRSSDDQKD. The span at 188 to 197 shows a compositional bias: polar residues; that stretch reads ARNTVNPSGS. The segment covering 198–208 has biased composition (basic and acidic residues); the sequence is HDTRSSDDQKD. ATP is bound by residues 218-221 and 231-233; these read QRYI and KFD. Residue arginine 257 participates in L-glutamate binding. 276–277 lines the ATP pocket; sequence TN. Lysine 294 is an L-glutamate binding site. Mg(2+) is bound by residues aspartate 348, glutamate 361, and asparagine 363. Lysine 379 is a binding site for L-glutamate.

This sequence belongs to the tubulin--tyrosine ligase family. It depends on Mg(2+) as a cofactor.

It is found in the cytoplasm. The protein resides in the cytoskeleton. Its subcellular location is the cilium basal body. It localises to the flagellum axoneme. The catalysed reaction is (L-glutamyl)(n)-gamma-L-glutamyl-L-glutamyl-[protein] + L-glutamate + ATP = (L-glutamyl)(n+1)-gamma-L-glutamyl-L-glutamyl-[protein] + ADP + phosphate + H(+). Its function is as follows. Probable tubulin polyglutamylase that generates side chains of glutamate on the gamma-carboxyl group of specific glutamate residues within the C-terminal tail of target proteins. Similar to TTLL1, may acquire enzymatic activity only in complex with other proteins as it is most likely lacking domains important for autonomous activity. Mediates tubulin polyglutamylation which induces establishment of microtubule heterogeneity in sperm flagella, thereby playing a role in normal motile flagella axoneme structure and sperm flagella beating pattern. The polypeptide is Probable tubulin polyglutamylase TTLL9 (TTLL9) (Bos taurus (Bovine)).